Here is a 306-residue protein sequence, read N- to C-terminus: 2-phospho-L-lactate transferase (306 aa).

2 residues coordinate 7,8-didemethyl-8-hydroxy-5-deazariboflavin: Asp54 and Arg93.

It belongs to the CofD family. Homodimer. Mg(2+) serves as cofactor.

The enzyme catalyses (2S)-lactyl-2-diphospho-5'-guanosine + 7,8-didemethyl-8-hydroxy-5-deazariboflavin = oxidized coenzyme F420-0 + GMP + H(+). It functions in the pathway cofactor biosynthesis; coenzyme F420 biosynthesis. Functionally, catalyzes the transfer of the 2-phospholactate moiety from (2S)-lactyl-2-diphospho-5'-guanosine to 7,8-didemethyl-8-hydroxy-5-deazariboflavin (FO) with the formation of oxidized coenzyme F420-0 and GMP. This chain is 2-phospho-L-lactate transferase, found in Methanothermobacter thermautotrophicus (strain ATCC 29096 / DSM 1053 / JCM 10044 / NBRC 100330 / Delta H) (Methanobacterium thermoautotrophicum).